Here is a 47-residue protein sequence, read N- to C-terminus: PhoP/PhoQ regulator MgrB (47 aa).

A helical transmembrane segment spans residues 6 to 26 (WVVLGIVVVVCLLLWAQVFNI).

It belongs to the MgrB family. In terms of assembly, may form homooligomers. Probably interacts with the periplasmic domain of PhoQ.

It is found in the cell inner membrane. PhoP-regulated transcription is redox-sensitive, being activated when the periplasm becomes more reducing. MgrB acts between DsbA/DsbB and PhoP/PhoQ in this pathway. Represses PhoP/PhoQ signaling, possibly by binding to the periplasmic domain of PhoQ, altering its activity and that of downstream effector PhoP. In Salmonella agona (strain SL483), this protein is PhoP/PhoQ regulator MgrB.